Consider the following 195-residue polypeptide: HTH-type transcriptional regulator BetI (195 aa).

Residues 8–68 form the HTH tetR-type domain; sequence EIRRAQLIDA…ATMRHVLRDL (61 aa). Residues 31 to 50 constitute a DNA-binding region (H-T-H motif); the sequence is TLASVAQRANISTGIVSHYF.

It functions in the pathway amine and polyamine biosynthesis; betaine biosynthesis via choline pathway [regulation]. Functionally, repressor involved in the biosynthesis of the osmoprotectant glycine betaine. It represses transcription of the choline transporter BetT and the genes of BetAB involved in the synthesis of glycine betaine. The protein is HTH-type transcriptional regulator BetI of Burkholderia thailandensis (strain ATCC 700388 / DSM 13276 / CCUG 48851 / CIP 106301 / E264).